A 282-amino-acid polypeptide reads, in one-letter code: Bifunctional protein FolD (282 aa).

NADP(+)-binding positions include 166 to 168 (GAS) and isoleucine 232.

It belongs to the tetrahydrofolate dehydrogenase/cyclohydrolase family. As to quaternary structure, homodimer.

The catalysed reaction is (6R)-5,10-methylene-5,6,7,8-tetrahydrofolate + NADP(+) = (6R)-5,10-methenyltetrahydrofolate + NADPH. It carries out the reaction (6R)-5,10-methenyltetrahydrofolate + H2O = (6R)-10-formyltetrahydrofolate + H(+). It functions in the pathway one-carbon metabolism; tetrahydrofolate interconversion. Functionally, catalyzes the oxidation of 5,10-methylenetetrahydrofolate to 5,10-methenyltetrahydrofolate and then the hydrolysis of 5,10-methenyltetrahydrofolate to 10-formyltetrahydrofolate. This Haemophilus influenzae (strain PittGG) protein is Bifunctional protein FolD.